The following is a 92-amino-acid chain: Large ribosomal subunit protein eL42 (92 aa).

Positions 11, 14, 70, and 73 each coordinate Zn(2+). The segment at 11–73 adopts a C4-type zinc-finger fold; sequence CPNCRKHTVH…LDLRLKCKEC (63 aa).

The protein belongs to the eukaryotic ribosomal protein eL42 family. As to quaternary structure, part of the 50S ribosomal subunit. Requires Zn(2+) as cofactor.

In terms of biological role, binds to the 23S rRNA. The sequence is that of Large ribosomal subunit protein eL42 from Methanothermobacter thermautotrophicus (strain ATCC 29096 / DSM 1053 / JCM 10044 / NBRC 100330 / Delta H) (Methanobacterium thermoautotrophicum).